The chain runs to 100 residues: Integration host factor subunit alpha (100 aa).

The protein belongs to the bacterial histone-like protein family. As to quaternary structure, heterodimer of an alpha and a beta chain.

Functionally, this protein is one of the two subunits of integration host factor, a specific DNA-binding protein that functions in genetic recombination as well as in transcriptional and translational control. This is Integration host factor subunit alpha from Ectopseudomonas mendocina (strain ymp) (Pseudomonas mendocina).